Reading from the N-terminus, the 140-residue chain is MATLHVDVVSAEEAIFTGEAKFVVLPGEAGELGILPGHTPLISRIRPGTVKIVRADEGEENIFVAGGILEVQPGSVTVLADTAIRAADLDEARAVAAREKAEEALRNAKDKADIAVVEAELAMLAAQAVAARKLRQGRTH.

Belongs to the ATPase epsilon chain family. As to quaternary structure, F-type ATPases have 2 components, CF(1) - the catalytic core - and CF(0) - the membrane proton channel. CF(1) has five subunits: alpha(3), beta(3), gamma(1), delta(1), epsilon(1). CF(0) has three main subunits: a, b and c.

Its subcellular location is the cell inner membrane. Its function is as follows. Produces ATP from ADP in the presence of a proton gradient across the membrane. The chain is ATP synthase epsilon chain from Bordetella bronchiseptica (strain ATCC BAA-588 / NCTC 13252 / RB50) (Alcaligenes bronchisepticus).